The following is a 510-amino-acid chain: Flavonoid 3',5'-hydroxylase (510 aa).

Cys-447 serves as a coordination point for heme.

It belongs to the cytochrome P450 family. The cofactor is heme.

It catalyses the reaction a 3',5'-unsubstituted flavanone + 2 reduced [NADPH--hemoprotein reductase] + 2 O2 = a 3',5'-dihydroxyflavanone + 2 oxidized [NADPH--hemoprotein reductase] + 2 H2O + 2 H(+). The protein operates within pigment biosynthesis; anthocyanin biosynthesis. Its function is as follows. Catalyzes the 3'5'-hydroxylation of naringenin and eriodictyol to form 5,7,3,'4',5'-pentahydroxyflavanone and 3',5'-hydroxylation of dihydrokaempferol and dihydroquercetin to form dihydromyricetin. The polypeptide is Flavonoid 3',5'-hydroxylase (CYP75A7) (Eustoma exaltatum subsp. russellianum (Bluebells)).